The chain runs to 104 residues: Complex III assembly factor LYRM7 (104 aa).

S60 carries the post-translational modification Phosphoserine.

It belongs to the complex I LYR family. Interacts with UQCRFS1.

It is found in the mitochondrion matrix. Functionally, assembly factor required for Rieske Fe-S protein UQCRFS1 incorporation into the cytochrome b-c1 (CIII) complex. Functions as a chaperone, binding to this subunit within the mitochondrial matrix and stabilizing it prior to its translocation and insertion into the late CIII dimeric intermediate within the mitochondrial inner membrane. The sequence is that of Complex III assembly factor LYRM7 (LYRM7) from Bos taurus (Bovine).